Consider the following 351-residue polypeptide: L-threonine 3-dehydrogenase (351 aa).

C42 contacts Zn(2+). Active-site charge relay system residues include T44 and H47. H67, E68, C97, C100, C103, and C111 together coordinate Zn(2+). Residues I179, D199, R204, 266 to 268 (LGL), and 291 to 292 (IT) contribute to the NAD(+) site.

Belongs to the zinc-containing alcohol dehydrogenase family. As to quaternary structure, homotetramer. It depends on Zn(2+) as a cofactor.

The protein localises to the cytoplasm. It carries out the reaction L-threonine + NAD(+) = (2S)-2-amino-3-oxobutanoate + NADH + H(+). It participates in amino-acid degradation; L-threonine degradation via oxydo-reductase pathway; glycine from L-threonine: step 1/2. Catalyzes the NAD(+)-dependent oxidation of L-threonine to 2-amino-3-ketobutyrate. In Symbiobacterium thermophilum (strain DSM 24528 / JCM 14929 / IAM 14863 / T), this protein is L-threonine 3-dehydrogenase.